The sequence spans 354 residues: 4-hydroxy-3-methylbut-2-en-1-yl diphosphate synthase (flavodoxin) (354 aa).

[4Fe-4S] cluster-binding residues include Cys-263, Cys-266, Cys-298, and Glu-305.

The protein belongs to the IspG family. It depends on [4Fe-4S] cluster as a cofactor.

The enzyme catalyses (2E)-4-hydroxy-3-methylbut-2-enyl diphosphate + oxidized [flavodoxin] + H2O + 2 H(+) = 2-C-methyl-D-erythritol 2,4-cyclic diphosphate + reduced [flavodoxin]. The protein operates within isoprenoid biosynthesis; isopentenyl diphosphate biosynthesis via DXP pathway; isopentenyl diphosphate from 1-deoxy-D-xylulose 5-phosphate: step 5/6. Converts 2C-methyl-D-erythritol 2,4-cyclodiphosphate (ME-2,4cPP) into 1-hydroxy-2-methyl-2-(E)-butenyl 4-diphosphate. This is 4-hydroxy-3-methylbut-2-en-1-yl diphosphate synthase (flavodoxin) from Fusobacterium nucleatum subsp. nucleatum (strain ATCC 25586 / DSM 15643 / BCRC 10681 / CIP 101130 / JCM 8532 / KCTC 2640 / LMG 13131 / VPI 4355).